Consider the following 184-residue polypeptide: Putative rRNA methyltransferase YlbH (184 aa).

The disordered stretch occupies residues 1–22; it reads MRVISGSKKGRSLKAVAGTSTR.

Belongs to the methyltransferase superfamily. RsmD family.

May catalyze the S-adenosyl-L-methionine-dependent methylation of a specific base in rRNA. This is Putative rRNA methyltransferase YlbH (ylbH) from Bacillus subtilis (strain 168).